The following is a 377-amino-acid chain: Diels-Alderase fsa2 (377 aa).

The protein belongs to the Diels-Alderase family.

It catalyses the reaction (5S)-3-[(2E,6R,8E,10E,12E)-2,6-dimethyltetradeca-2,8,10,12-tetraenoyl]-5-(hydroxymethyl)pyrrolidine-2,4-dione = trichosetin. It participates in mycotoxin biosynthesis. Diels-Alderase; part of the gene cluster that mediates the biosynthesis of equisetin, a trans-fused decalin-containing tetramic acid with antimicrobial activity. The PKS module of eqxS together with the enoylreductase eqxC catalyze the formation of the polyketide unit which is then conjugated to L-serine by the condensation domain of the eqxS NRPS module. Activity of the Dieckmann cyclase domain (RED) results in release of the Dieckmann product intermediate. Diels-Alderase eqx3 is involved in endo-selective Diels-Alder cycloaddition to form the decalin ring, leading to the production of N-desmethylequisetin also called trichosetin. Subsequent N-methylation is carried out by eqxD to give equisetin. The polypeptide is Diels-Alderase fsa2 (Fusarium heterosporum).